The primary structure comprises 101 residues: MVNTDNKENEPPNMEKAHMDSSNALYRVQRPLQRRPLQELSIELVKPSQTITVKKSKKSTNSSSYFAQLHAASGQNPPPSVHSSHKQPSKARSPNPLLSMR.

Residues 1–19 are compositionally biased toward basic and acidic residues; it reads MVNTDNKENEPPNMEKAHM. Residues 1–101 form a disordered region; that stretch reads MVNTDNKENE…RSPNPLLSMR (101 aa).

In terms of assembly, interacts with slp1.

The protein localises to the cytoplasm. Its subcellular location is the nucleus. Specifically required for meiosis II (MII). Binds to slp1, an activator of the anapahase promoting complex/cyclcosome (APC/C), and counteracts its function in promoting proteolysis of cdc13. By suppressing the degradation of cdc13 at anaphase I this protein may help maintain a sufficient level of cdc2 kinase activity to complete MII. This is Protein mes1 (mes1) from Schizosaccharomyces pombe (strain 972 / ATCC 24843) (Fission yeast).